Consider the following 372-residue polypeptide: Glutamate 5-kinase (372 aa).

Residue lysine 14 coordinates ATP. 3 residues coordinate substrate: serine 54, aspartate 141, and asparagine 153. ATP is bound at residue 173–174 (TD). One can recognise a PUA domain in the interval 280–358 (RGTLVLDDGA…DAIVGLLGYM (79 aa)).

Belongs to the glutamate 5-kinase family.

Its subcellular location is the cytoplasm. It carries out the reaction L-glutamate + ATP = L-glutamyl 5-phosphate + ADP. Its pathway is amino-acid biosynthesis; L-proline biosynthesis; L-glutamate 5-semialdehyde from L-glutamate: step 1/2. Functionally, catalyzes the transfer of a phosphate group to glutamate to form L-glutamate 5-phosphate. The protein is Glutamate 5-kinase of Pseudomonas fluorescens (strain Pf0-1).